Consider the following 585-residue polypeptide: A-type ATP synthase subunit A (585 aa).

237-244 (GPFGSGKT) is an ATP binding site.

Belongs to the ATPase alpha/beta chains family. In terms of assembly, has multiple subunits with at least A(3), B(3), C, D, E, F, H, I and proteolipid K(x).

The protein resides in the cell membrane. The enzyme catalyses ATP + H2O + 4 H(+)(in) = ADP + phosphate + 5 H(+)(out). In terms of biological role, component of the A-type ATP synthase that produces ATP from ADP in the presence of a proton gradient across the membrane. The A chain is the catalytic subunit. In Natronomonas pharaonis (strain ATCC 35678 / DSM 2160 / CIP 103997 / JCM 8858 / NBRC 14720 / NCIMB 2260 / Gabara) (Halobacterium pharaonis), this protein is A-type ATP synthase subunit A.